A 401-amino-acid chain; its full sequence is uncharacterized protein (401 aa).

The residue at position 242 (Lys242) is an N6-(pyridoxal phosphate)lysine.

The protein belongs to the class-I pyridoxal-phosphate-dependent aminotransferase family. As to quaternary structure, homodimer. Requires pyridoxal 5'-phosphate as cofactor.

The protein localises to the cytoplasm. This is an uncharacterized protein from Saccharolobus solfataricus (strain ATCC 35092 / DSM 1617 / JCM 11322 / P2) (Sulfolobus solfataricus).